The chain runs to 41 residues: uncharacterized protein (41 aa).

This is an uncharacterized protein from Dictyostelium discoideum (Social amoeba).